Reading from the N-terminus, the 226-residue chain is MNENLFTSFATPTILGLPAAVPIILFPSLLIPTSKYLINNRLITTQQWLIQLTLKQMMTMHNTKGRTWSLMLISLITFIATTNLLGLLPHSFTPTTQLSMNLAMAIPLWAGTVATGFRLKAKNTLAHLLPQGTPTPLIPMLIIIETISLFIQPVALAVRLTANITAGHLLMHLIGAATMALSTISLPATPIIFTVLTLLTTLEIAVALIQAYVFTLLVSLYLHDNT.

6 helical membrane passes run 12-32 (PTIL…LLIP), 68-88 (WSLM…LGLL), 97-117 (QLSM…ATGF), 138-158 (IPML…ALAV), 164-184 (ITAG…LSTI), and 200-222 (TTLE…SLYL).

This sequence belongs to the ATPase A chain family. Component of the ATP synthase complex composed at least of ATP5F1A/subunit alpha, ATP5F1B/subunit beta, ATP5MC1/subunit c (homooctomer), MT-ATP6/subunit a, MT-ATP8/subunit 8, ATP5ME/subunit e, ATP5MF/subunit f, ATP5MG/subunit g, ATP5MK/subunit k, ATP5MJ/subunit j, ATP5F1C/subunit gamma, ATP5F1D/subunit delta, ATP5F1E/subunit epsilon, ATP5PF/subunit F6, ATP5PB/subunit b, ATP5PD/subunit d, ATP5PO/subunit OSCP. ATP synthase complex consists of a soluble F(1) head domain (subunits alpha(3) and beta(3)) - the catalytic core - and a membrane F(0) domain - the membrane proton channel (subunits c, a, 8, e, f, g, k and j). These two domains are linked by a central stalk (subunits gamma, delta, and epsilon) rotating inside the F1 region and a stationary peripheral stalk (subunits F6, b, d, and OSCP). Interacts with DNAJC30; interaction is direct.

It is found in the mitochondrion inner membrane. It carries out the reaction H(+)(in) = H(+)(out). Subunit a, of the mitochondrial membrane ATP synthase complex (F(1)F(0) ATP synthase or Complex V) that produces ATP from ADP in the presence of a proton gradient across the membrane which is generated by electron transport complexes of the respiratory chain. ATP synthase complex consist of a soluble F(1) head domain - the catalytic core - and a membrane F(1) domain - the membrane proton channel. These two domains are linked by a central stalk rotating inside the F(1) region and a stationary peripheral stalk. During catalysis, ATP synthesis in the catalytic domain of F(1) is coupled via a rotary mechanism of the central stalk subunits to proton translocation. With the subunit c (ATP5MC1), forms the proton-conducting channel in the F(0) domain, that contains two crucial half-channels (inlet and outlet) that facilitate proton movement from the mitochondrial intermembrane space (IMS) into the matrix. Protons are taken up via the inlet half-channel and released through the outlet half-channel, following a Grotthuss mechanism. The chain is ATP synthase F(0) complex subunit a from Hylobates lar (Lar gibbon).